Consider the following 141-residue polypeptide: Nucleoside diphosphate kinase (141 aa).

ATP is bound by residues Lys11, Phe59, Arg87, Thr93, Arg104, and Asn114. Catalysis depends on His117, which acts as the Pros-phosphohistidine intermediate.

This sequence belongs to the NDK family. Homotetramer. The cofactor is Mg(2+).

The protein resides in the cytoplasm. It catalyses the reaction a 2'-deoxyribonucleoside 5'-diphosphate + ATP = a 2'-deoxyribonucleoside 5'-triphosphate + ADP. The catalysed reaction is a ribonucleoside 5'-diphosphate + ATP = a ribonucleoside 5'-triphosphate + ADP. Its function is as follows. Major role in the synthesis of nucleoside triphosphates other than ATP. The ATP gamma phosphate is transferred to the NDP beta phosphate via a ping-pong mechanism, using a phosphorylated active-site intermediate. The chain is Nucleoside diphosphate kinase from Acidovorax sp. (strain JS42).